A 109-amino-acid chain; its full sequence is Tyrosine-protein phosphatase 4 (109 aa).

Residues 1 to 109 (SKSASIVMLT…QNSGNHPIVI (109 aa)) form the Tyrosine-protein phosphatase domain. Position 78 (E78) interacts with substrate.

It belongs to the protein-tyrosine phosphatase family.

The catalysed reaction is O-phospho-L-tyrosyl-[protein] + H2O = L-tyrosyl-[protein] + phosphate. This Styela plicata (Wrinkled sea squirt) protein is Tyrosine-protein phosphatase 4 (STY-4).